Reading from the N-terminus, the 545-residue chain is GMP synthase [glutamine-hydrolyzing] (545 aa).

Residues 17-211 (TVLVLDMGSQ…ATKICGARPD (195 aa)) enclose the Glutamine amidotransferase type-1 domain. The active-site Nucleophile is the C93. Residues H185 and E187 contribute to the active site. In terms of domain architecture, GMPS ATP-PPase spans 212-420 (WKMDDFSARE…LGIHEELIGR (209 aa)). Residue 240–246 (SGGVDST) participates in ATP binding. XMP is bound by residues R313, D482, K537, and E543.

As to quaternary structure, homodimer. Requires Mg(2+) as cofactor.

It localises to the cytoplasm. The protein resides in the cytosol. It catalyses the reaction XMP + L-glutamine + ATP + H2O = GMP + L-glutamate + AMP + diphosphate + 2 H(+). It participates in purine metabolism; GMP biosynthesis; GMP from XMP (L-Gln route): step 1/1. Its function is as follows. Catalyzes the conversion of xanthine monophosphate (XMP) to GMP in the presence of glutamine and ATP through an adenyl-XMP intermediate. The protein is GMP synthase [glutamine-hydrolyzing] (GUA1) of Gibberella zeae (strain ATCC MYA-4620 / CBS 123657 / FGSC 9075 / NRRL 31084 / PH-1) (Wheat head blight fungus).